The sequence spans 301 residues: D-alanine--D-alanine ligase (301 aa).

In terms of domain architecture, ATP-grasp spans 99 to 294 (KCILKAANIR…FPELIDMIID (196 aa)). 126–181 (IEKMGYPVVVKPTHGGSSVATFIIKEEKDIKDAVIEGFKWDSEVIIEKFIKGDEIT) serves as a coordination point for ATP. Mg(2+) contacts are provided by D248, E261, and N263.

Belongs to the D-alanine--D-alanine ligase family. Mg(2+) is required as a cofactor. It depends on Mn(2+) as a cofactor.

It is found in the cytoplasm. The enzyme catalyses 2 D-alanine + ATP = D-alanyl-D-alanine + ADP + phosphate + H(+). It functions in the pathway cell wall biogenesis; peptidoglycan biosynthesis. In terms of biological role, cell wall formation. This chain is D-alanine--D-alanine ligase, found in Clostridium botulinum (strain Alaska E43 / Type E3).